We begin with the raw amino-acid sequence, 213 residues long: Putative manganese efflux pump MntP (213 aa).

7 helical membrane-spanning segments follow: residues Leu6–Met26, Ala34–Leu54, Ala58–Leu78, Gly107–Pro127, Leu132–Thr152, Val153–Val173, and Leu192–Pro212.

This sequence belongs to the MntP (TC 9.B.29) family.

It localises to the cell membrane. In terms of biological role, probably functions as a manganese efflux pump. The polypeptide is Putative manganese efflux pump MntP (Heliobacterium modesticaldum (strain ATCC 51547 / Ice1)).